Consider the following 412-residue polypeptide: Esterase EstD (412 aa).

The first 20 residues, 1-20, serve as a signal peptide directing secretion; sequence MRLTVFLSLFLGVMVFGAFD. Serine 243 serves as the catalytic Nucleophile. Residues aspartate 347 and histidine 378 each act as charge relay system in the active site.

It belongs to the AB hydrolase superfamily. Esterase 10 family. As to quaternary structure, exists mainly as a monomer and, to some extent as a dimer.

It catalyses the reaction a carboxylic ester + H2O = an alcohol + a carboxylate + H(+). Is strongly inhibited by phenylmethylsulfonyl fluoride, a serine protease inhibitor, and by mercury chloride. Diethyl pyrocarbonate, a histidine modifier, also inhibits the reaction, albeit less pronounced than phenylmethylsulfonyl fluoride. EDTA and dithiothreitol have no effect on enzyme activity. Exhibits significant esterase activity with a preference for short acyl chain esters (C4-C8) in vitro. Its physiological function is not known. Displays neither proteolytic activity using casein as substrate, nor peptidase activity when assayed with L-leucine p-nitroanilide and L-proline p-nitroanilide. This chain is Esterase EstD, found in Thermotoga maritima (strain ATCC 43589 / DSM 3109 / JCM 10099 / NBRC 100826 / MSB8).